The sequence spans 122 residues: Large ribosomal subunit protein bL12 (122 aa).

The protein belongs to the bacterial ribosomal protein bL12 family. In terms of assembly, homodimer. Part of the ribosomal stalk of the 50S ribosomal subunit. Forms a multimeric L10(L12)X complex, where L10 forms an elongated spine to which 2 to 4 L12 dimers bind in a sequential fashion. Binds GTP-bound translation factors.

Its function is as follows. Forms part of the ribosomal stalk which helps the ribosome interact with GTP-bound translation factors. Is thus essential for accurate translation. This Bdellovibrio bacteriovorus (strain ATCC 15356 / DSM 50701 / NCIMB 9529 / HD100) protein is Large ribosomal subunit protein bL12.